The primary structure comprises 517 residues: C-22 sterol desaturase ERG5 (517 aa).

Residues 21 to 41 (LAVAKATGSPITTLFTIIFLI) form a helical membrane-spanning segment. Cys-458 serves as a coordination point for heme.

It belongs to the cytochrome P450 family. Requires heme as cofactor.

It localises to the endoplasmic reticulum membrane. The enzyme catalyses 5-dehydroepisterol + NADPH + O2 + H(+) = ergosta-5,7,22,24(28)-tetraen-3beta-ol + NADP(+) + 2 H2O. It participates in steroid metabolism; ergosterol biosynthesis; ergosterol from zymosterol: step 4/5. Its function is as follows. C-22 sterol desaturase; part of the third module of ergosterol biosynthesis pathway that includes the late steps of the pathway. ERG5 converts 5-dehydroepisterol into ergosta-5,7,22,24(28)-tetraen-3beta-ol by forming the C-22(23) double bond in the sterol side chain. The third module or late pathway involves the ergosterol synthesis itself through consecutive reactions that mainly occur in the endoplasmic reticulum (ER) membrane. Firstly, the squalene synthase ERG9 catalyzes the condensation of 2 farnesyl pyrophosphate moieties to form squalene, which is the precursor of all steroids. Squalene synthase is crucial for balancing the incorporation of farnesyl diphosphate (FPP) into sterol and nonsterol isoprene synthesis. Secondly, the squalene epoxidase ERG1 catalyzes the stereospecific oxidation of squalene to (S)-2,3-epoxysqualene, which is considered to be a rate-limiting enzyme in steroid biosynthesis. Then, the lanosterol synthase ERG7 catalyzes the cyclization of (S)-2,3 oxidosqualene to lanosterol, a reaction that forms the sterol core. In the next steps, lanosterol is transformed to zymosterol through a complex process involving various demethylation, reduction and desaturation reactions. The lanosterol 14-alpha-demethylase ERG11 (also known as CYP51) catalyzes C14-demethylation of lanosterol to produce 4,4'-dimethyl cholesta-8,14,24-triene-3-beta-ol, which is critical for ergosterol biosynthesis. The C-14 reductase ERG24 reduces the C14=C15 double bond of 4,4-dimethyl-cholesta-8,14,24-trienol to produce 4,4-dimethyl-cholesta-8,24-dienol. 4,4-dimethyl-cholesta-8,24-dienol is substrate of the C-4 demethylation complex ERG25-ERG26-ERG27 in which ERG25 catalyzes the three-step monooxygenation required for the demethylation of 4,4-dimethyl and 4alpha-methylsterols, ERG26 catalyzes the oxidative decarboxylation that results in a reduction of the 3-beta-hydroxy group at the C-3 carbon to an oxo group, and ERG27 is responsible for the reduction of the keto group on the C-3. ERG28 has a role as a scaffold to help anchor ERG25, ERG26 and ERG27 to the endoplasmic reticulum and ERG29 regulates the activity of the iron-containing C4-methylsterol oxidase ERG25. Then, the sterol 24-C-methyltransferase ERG6 catalyzes the methyl transfer from S-adenosyl-methionine to the C-24 of zymosterol to form fecosterol. The C-8 sterol isomerase ERG2 catalyzes the reaction which results in unsaturation at C-7 in the B ring of sterols and thus converts fecosterol to episterol. The sterol-C5-desaturase ERG3 then catalyzes the introduction of a C-5 double bond in the B ring to produce 5-dehydroepisterol. The C-22 sterol desaturase ERG5 further converts 5-dehydroepisterol into ergosta-5,7,22,24(28)-tetraen-3beta-ol by forming the C-22(23) double bond in the sterol side chain. Finally, ergosta-5,7,22,24(28)-tetraen-3beta-ol is substrate of the C-24(28) sterol reductase ERG4 to produce ergosterol. The chain is C-22 sterol desaturase ERG5 from Candida albicans (strain SC5314 / ATCC MYA-2876) (Yeast).